A 211-amino-acid chain; its full sequence is uncharacterized protein (211 aa).

Disordered stretches follow at residues R45 to S74 and A147 to P211. Residues G48–G71 are compositionally biased toward low complexity. Polar residues predominate over residues D195–E205.

This is an uncharacterized protein from Homo sapiens (Human).